A 337-amino-acid chain; its full sequence is G-protein coupled receptor 26 (337 aa).

Residues 1-10 (MNSWDAGLAG) are Extracellular-facing. Residues 11 to 31 (LLVGTIGVSLLSNGLVLLCLL) form a helical membrane-spanning segment. The Cytoplasmic portion of the chain corresponds to 32–47 (HSADIRRQAPALFTLN). Residues 48–68 (LTCGNLLCTVVNMPLTLAGVV) form a helical membrane-spanning segment. The Extracellular portion of the chain corresponds to 69–81 (AQRQPAGDRLCRL). A disulfide bridge connects residues Cys79 and Cys156. Residues 82-102 (AAFLDTFLAANSMLSMAALSI) traverse the membrane as a helical segment. Over 103-123 (DRWVAVVFPLSYRAKMRLRDA) the chain is Cytoplasmic. Residues 124–144 (AFMVAYTWLHALTFPATALAL) form a helical membrane-spanning segment. Topologically, residues 145-168 (SWLGFHQLYASCTLCSRRPDERLR) are extracellular. Residues 169-189 (FAVFTSAFHALSFLLSFIVLC) form a helical membrane-spanning segment. The Cytoplasmic portion of the chain corresponds to 190 to 245 (FTYLKVLKVARFHCKRIDVITMQTLVLLVDIHPSVRERCLEEQKRRRQRATKKIST). A helical transmembrane segment spans residues 246–266 (FIGTFLVCFAPYVITRLVELF). Residues 267–276 (STAPIDSHWG) lie on the Extracellular side of the membrane. Residues 277–297 (VLSKCLAYSKAASDPFVYSLL) traverse the membrane as a helical segment. Residues 298 to 337 (RHQYRRSCKELLNRIFNRRSIHSVGLTGDSHSQNILPVSE) are Cytoplasmic-facing.

This sequence belongs to the G-protein coupled receptor 1 family. As to expression, detected in extracts of several brain regions including striatum, pons, cerebellum and cortex. Not detected in numerous peripheral tissue extracts, except in testis. In the brain, detected in cortical structures including the anterior cingulate area, posterior cingulate and the frontoparietal, somatosensory and piriform cortices. Prominent also in the olfactory tubercle, the islands of Calleja, ventromedial and posterior nuclei of the hypothalamus, the medial septal nucleus, nucleus of the diagonal band and the ventral tegmental area. Localized also to hippocampal structures, with signals strongest over the CA2 and CA3 regions of Ammon's horn and less so over the dentate gyrus. Expressed in the caudate putamen only in its most caudal portion, with a decreasing gradient of signal from the dorsal to ventral aspect. Strong expression associated with a single pontine structure, the inferior olivary nucleus.

Its subcellular location is the cell membrane. In terms of biological role, orphan receptor. Displays a significant level of constitutive activity. Its effect is mediated by G(s)-alpha protein that stimulate adenylate cyclase, resulting in an elevation of intracellular cAMP. This chain is G-protein coupled receptor 26 (Gpr26), found in Rattus norvegicus (Rat).